The primary structure comprises 527 residues: GMP synthase [glutamine-hydrolyzing] (527 aa).

Residues 4-202 (KILILDFGSQ…VLKICGAKPD (199 aa)) form the Glutamine amidotransferase type-1 domain. C81 acts as the Nucleophile in catalysis. Catalysis depends on residues H176 and E178. Residues 203–395 (WEMGNYIDEA…LGLPPSMVYR (193 aa)) form the GMPS ATP-PPase domain. 230-236 (SGGVDSS) contacts ATP.

Homodimer.

It catalyses the reaction XMP + L-glutamine + ATP + H2O = GMP + L-glutamate + AMP + diphosphate + 2 H(+). It participates in purine metabolism; GMP biosynthesis; GMP from XMP (L-Gln route): step 1/1. In terms of biological role, catalyzes the synthesis of GMP from XMP. In Paraburkholderia phymatum (strain DSM 17167 / CIP 108236 / LMG 21445 / STM815) (Burkholderia phymatum), this protein is GMP synthase [glutamine-hydrolyzing].